A 104-amino-acid polypeptide reads, in one-letter code: Large ribosomal subunit protein uL24 (104 aa).

The protein belongs to the universal ribosomal protein uL24 family. As to quaternary structure, part of the 50S ribosomal subunit.

In terms of biological role, one of two assembly initiator proteins, it binds directly to the 5'-end of the 23S rRNA, where it nucleates assembly of the 50S subunit. Functionally, one of the proteins that surrounds the polypeptide exit tunnel on the outside of the subunit. The protein is Large ribosomal subunit protein uL24 of Rhodopseudomonas palustris (strain BisB18).